The primary structure comprises 55 residues: Large ribosomal subunit protein bL33B (55 aa).

Belongs to the bacterial ribosomal protein bL33 family.

The sequence is that of Large ribosomal subunit protein bL33B from Mycolicibacterium paratuberculosis (strain ATCC BAA-968 / K-10) (Mycobacterium paratuberculosis).